Reading from the N-terminus, the 371-residue chain is Putative 8-amino-7-oxononanoate synthase (371 aa).

Substrate is bound at residue arginine 21. Residue 108 to 109 (GY) coordinates pyridoxal 5'-phosphate. Residue histidine 133 participates in substrate binding. Pyridoxal 5'-phosphate-binding positions include serine 180, 205-208 (DDAH), and 234-237 (TLSK). Position 237 is an N6-(pyridoxal phosphate)lysine (lysine 237). Threonine 333 lines the substrate pocket.

This sequence belongs to the class-II pyridoxal-phosphate-dependent aminotransferase family. BioF subfamily. As to quaternary structure, homodimer. The cofactor is pyridoxal 5'-phosphate.

It catalyses the reaction 6-carboxyhexanoyl-[ACP] + L-alanine + H(+) = (8S)-8-amino-7-oxononanoate + holo-[ACP] + CO2. It participates in cofactor biosynthesis; biotin biosynthesis. Functionally, catalyzes the decarboxylative condensation of pimeloyl-[acyl-carrier protein] and L-alanine to produce 8-amino-7-oxononanoate (AON), [acyl-carrier protein], and carbon dioxide. This Bacillus subtilis subsp. natto protein is Putative 8-amino-7-oxononanoate synthase (bioF).